The following is a 910-amino-acid chain: DnaJ-like protein MG200 homolog (910 aa).

The region spanning 4–73 (AKRDYYEVLG…RANYDKYGHD (70 aa)) is the J domain. Disordered regions lie at residues 102 to 160 (DNLS…DDIP), 260 to 408 (TEPS…LEQD), and 451 to 486 (VLSD…STAP). Over residues 111–121 (KKEKTKTKKKG) the composition is skewed to basic residues. Over residues 273 to 283 (DSDAVTAATTV) the composition is skewed to low complexity. Acidic residues predominate over residues 357–379 (SDEADATNEPTEQDTISEPEQET). Residues 451 to 462 (VLSDQNPNPQTP) show a composition bias toward polar residues.

This Mycoplasma pneumoniae (strain ATCC 29342 / M129 / Subtype 1) (Mycoplasmoides pneumoniae) protein is DnaJ-like protein MG200 homolog.